A 309-amino-acid chain; its full sequence is Protein FdhE (309 aa).

The protein belongs to the FdhE family.

The protein localises to the cytoplasm. In terms of biological role, necessary for formate dehydrogenase activity. In Salmonella typhimurium (strain LT2 / SGSC1412 / ATCC 700720), this protein is Protein FdhE.